The primary structure comprises 290 residues: uncharacterized protein (290 aa).

A signal peptide spans 1 to 25 (MNKKSILSKTSLGSLFFLFGTALSA). Cys26 carries N-palmitoyl cysteine lipidation. A lipid anchor (S-diacylglycerol cysteine) is attached at Cys26. The disordered stretch occupies residues 183–203 (GTDSKGSGSNNQNGGVTEKDF). Over residues 186–197 (SKGSGSNNQNGG) the composition is skewed to low complexity.

Belongs to the MG439/MG440 family.

Its subcellular location is the cell membrane. This is an uncharacterized protein from Mycoplasma pneumoniae (strain ATCC 29342 / M129 / Subtype 1) (Mycoplasmoides pneumoniae).